A 452-amino-acid chain; its full sequence is Peptidoglycan DL-endopeptidase CwlO (452 aa).

The signal sequence occupies residues 1–30 (MKKKVYTFGLASILGTASLFTPFMNNTASA). Residues 28 to 38 (ASAETSQQKQE) are compositionally biased toward polar residues. Disordered stretches follow at residues 28–53 (ASAETSQQKQEIQQKRSEVNSGIESK) and 258–317 (AAAA…GSVV). 2 stretches are compositionally biased toward basic and acidic residues: residues 39 to 53 (IQQKRSEVNSGIESK) and 263 to 275 (KAKEESATAEKSD). Over residues 276 to 317 (SGSSSSSNSGSVSKSDGSSNSGSSSSKKSSSPSRNYSSGSVV) the composition is skewed to low complexity. Residues 321 to 450 (GNAIEAAIST…KAFNGVVRRV (130 aa)) form the NlpC/P60 domain. C358 (nucleophile) is an active-site residue. H410 functions as the Proton acceptor in the catalytic mechanism. N422 is a catalytic residue.

Belongs to the peptidase C40 family.

The protein localises to the secreted. Its function is as follows. Shows a cell wall hydrolytic DL-endopeptidase activity. This chain is Peptidoglycan DL-endopeptidase CwlO (cwlO), found in Bacillus licheniformis (strain ATCC 14580 / DSM 13 / JCM 2505 / CCUG 7422 / NBRC 12200 / NCIMB 9375 / NCTC 10341 / NRRL NRS-1264 / Gibson 46).